The primary structure comprises 379 residues: Forkhead box protein F1 (379 aa).

Residues 1 to 45 (MSSAPEKQQPPHGGGGGGGGGGGAAMDPASSGPSKAKKTNAGIRR) are disordered. The segment covering 12–24 (HGGGGGGGGGGGA) has biased composition (gly residues). The fork-head DNA-binding region spans 47-138 (EKPPYSYIAL…EFMFEEGSFR (92 aa)).

In terms of tissue distribution, expressed in lung and placenta.

It is found in the nucleus. Functionally, probable transcription activator for a number of lung-specific genes. The sequence is that of Forkhead box protein F1 (FOXF1) from Homo sapiens (Human).